Here is a 477-residue protein sequence, read N- to C-terminus: Ribulose bisphosphate carboxylase large chain (477 aa).

The propeptide occupies 1–2; the sequence is MS. Pro3 bears the N-acetylproline mark. Substrate is bound by residues Asn123 and Thr173. Lys175 functions as the Proton acceptor in the catalytic mechanism. Residue Lys177 participates in substrate binding. The Mg(2+) site is built by Lys201, Asp203, and Glu204. An N6-carboxylysine modification is found at Lys201. His294 (proton acceptor) is an active-site residue. 3 residues coordinate substrate: Arg295, His327, and Ser379.

This sequence belongs to the RuBisCO large chain family. Type I subfamily. As to quaternary structure, heterohexadecamer of 8 large chains and 8 small chains; disulfide-linked. The disulfide link is formed within the large subunit homodimers. It depends on Mg(2+) as a cofactor. The disulfide bond which can form between Cys-247 in the large chain dimeric partners within the hexadecamer appears to be associated with oxidative stress and protein turnover.

It localises to the plastid. The protein localises to the chloroplast. It carries out the reaction 2 (2R)-3-phosphoglycerate + 2 H(+) = D-ribulose 1,5-bisphosphate + CO2 + H2O. The catalysed reaction is D-ribulose 1,5-bisphosphate + O2 = 2-phosphoglycolate + (2R)-3-phosphoglycerate + 2 H(+). In terms of biological role, ruBisCO catalyzes two reactions: the carboxylation of D-ribulose 1,5-bisphosphate, the primary event in carbon dioxide fixation, as well as the oxidative fragmentation of the pentose substrate in the photorespiration process. Both reactions occur simultaneously and in competition at the same active site. The chain is Ribulose bisphosphate carboxylase large chain (rbcL) from Triticum aestivum (Wheat).